The chain runs to 212 residues: Protein-L-isoaspartate O-methyltransferase (212 aa).

The active site involves serine 60.

Belongs to the methyltransferase superfamily. L-isoaspartyl/D-aspartyl protein methyltransferase family.

It is found in the cytoplasm. It carries out the reaction [protein]-L-isoaspartate + S-adenosyl-L-methionine = [protein]-L-isoaspartate alpha-methyl ester + S-adenosyl-L-homocysteine. Catalyzes the methyl esterification of L-isoaspartyl residues in peptides and proteins that result from spontaneous decomposition of normal L-aspartyl and L-asparaginyl residues. It plays a role in the repair and/or degradation of damaged proteins. This is Protein-L-isoaspartate O-methyltransferase from Methylorubrum populi (strain ATCC BAA-705 / NCIMB 13946 / BJ001) (Methylobacterium populi).